The chain runs to 469 residues: Arginine biosynthesis bifunctional protein ArgJ, chloroplastic (469 aa).

Residues Thr-213, Lys-239, Thr-250, Glu-337, Asn-464, and Thr-469 each coordinate substrate. Thr-250 acts as the Nucleophile in catalysis.

This sequence belongs to the ArgJ family. As to quaternary structure, heterodimer of an alpha and a beta chain.

It localises to the plastid. The protein localises to the chloroplast. It carries out the reaction N(2)-acetyl-L-ornithine + L-glutamate = N-acetyl-L-glutamate + L-ornithine. The enzyme catalyses L-glutamate + acetyl-CoA = N-acetyl-L-glutamate + CoA + H(+). The protein operates within amino-acid biosynthesis; L-arginine biosynthesis; L-ornithine and N-acetyl-L-glutamate from L-glutamate and N(2)-acetyl-L-ornithine (cyclic): step 1/1. Its pathway is amino-acid biosynthesis; L-arginine biosynthesis; N(2)-acetyl-L-ornithine from L-glutamate: step 1/4. Catalyzes two activities which are involved in the cyclic version of arginine biosynthesis: the synthesis of acetylglutamate from glutamate and acetyl-CoA, and of ornithine by transacetylation between acetylornithine and glutamate. This is Arginine biosynthesis bifunctional protein ArgJ, chloroplastic from Ricinus communis (Castor bean).